Here is an 848-residue protein sequence, read N- to C-terminus: DNA mismatch repair protein MutS (848 aa).

605–612 (GPNMAGKS) is an ATP binding site.

Belongs to the DNA mismatch repair MutS family.

In terms of biological role, this protein is involved in the repair of mismatches in DNA. It is possible that it carries out the mismatch recognition step. This protein has a weak ATPase activity. The polypeptide is DNA mismatch repair protein MutS (Leptospira interrogans serogroup Icterohaemorrhagiae serovar Lai (strain 56601)).